Here is a 387-residue protein sequence, read N- to C-terminus: Chaperone protein DnaJ (387 aa).

One can recognise a J domain in the interval 6–70 (DYYEILGLSR…EKRAQYDRFG (65 aa)). The CR-type zinc finger occupies 130–212 (GVRKDIDVPR…CSGTGRVRNT (83 aa)). The Zn(2+) site is built by cysteine 143, cysteine 146, cysteine 160, cysteine 163, cysteine 186, cysteine 189, cysteine 200, and cysteine 203. CXXCXGXG motif repeat units lie at residues 143-150 (CSNCSGTG), 160-167 (CPTCGGTG), 186-193 (CSTCRGKG), and 200-207 (CPVCSGTG). The disordered stretch occupies residues 143–162 (CSNCSGTGARPGTSPKRCPT).

It belongs to the DnaJ family. Homodimer. Requires Zn(2+) as cofactor.

It localises to the cytoplasm. Participates actively in the response to hyperosmotic and heat shock by preventing the aggregation of stress-denatured proteins and by disaggregating proteins, also in an autonomous, DnaK-independent fashion. Unfolded proteins bind initially to DnaJ; upon interaction with the DnaJ-bound protein, DnaK hydrolyzes its bound ATP, resulting in the formation of a stable complex. GrpE releases ADP from DnaK; ATP binding to DnaK triggers the release of the substrate protein, thus completing the reaction cycle. Several rounds of ATP-dependent interactions between DnaJ, DnaK and GrpE are required for fully efficient folding. Also involved, together with DnaK and GrpE, in the DNA replication of plasmids through activation of initiation proteins. The polypeptide is Chaperone protein DnaJ (Methanosarcina thermophila).